We begin with the raw amino-acid sequence, 681 residues long: Methionine--tRNA ligase (681 aa).

The 'HIGH' region signature appears at 14–24 (PYANGSIHLGH). Zn(2+) contacts are provided by C145, C148, C158, and C161. Positions 331 to 335 (KMSKS) match the 'KMSKS' region motif. K334 is an ATP binding site. Residues 579-681 (AFAAVDLRIA…AGAKPGQRVH (103 aa)) form the tRNA-binding domain.

It belongs to the class-I aminoacyl-tRNA synthetase family. MetG type 1 subfamily. In terms of assembly, homodimer. It depends on Zn(2+) as a cofactor.

Its subcellular location is the cytoplasm. The catalysed reaction is tRNA(Met) + L-methionine + ATP = L-methionyl-tRNA(Met) + AMP + diphosphate. Is required not only for elongation of protein synthesis but also for the initiation of all mRNA translation through initiator tRNA(fMet) aminoacylation. The sequence is that of Methionine--tRNA ligase from Azotobacter vinelandii (strain DJ / ATCC BAA-1303).